Here is a 215-residue protein sequence, read N- to C-terminus: Adenylate kinase (215 aa).

10 to 15 serves as a coordination point for ATP; sequence GAGKGT. The tract at residues 30–59 is NMP; the sequence is STGDMLRAAIKAGTPLGLEAKKIIDEGGLV. AMP-binding positions include Thr31, Arg36, 57-59, 85-88, and Gln92; these read GLV and GFPR. Residues 122 to 159 form an LID region; that stretch reads GRRVHLASGRTYHVTYNPPKVEGKDDVTGEDLIQRDDD. ATP-binding positions include Arg123 and 132–133; that span reads TY. Residues Arg156 and Arg167 each contribute to the AMP site. An ATP-binding site is contributed by Gln200.

The protein belongs to the adenylate kinase family. As to quaternary structure, monomer.

The protein resides in the cytoplasm. The enzyme catalyses AMP + ATP = 2 ADP. The protein operates within purine metabolism; AMP biosynthesis via salvage pathway; AMP from ADP: step 1/1. Its function is as follows. Catalyzes the reversible transfer of the terminal phosphate group between ATP and AMP. Plays an important role in cellular energy homeostasis and in adenine nucleotide metabolism. This chain is Adenylate kinase, found in Neisseria meningitidis serogroup B (strain ATCC BAA-335 / MC58).